The following is a 251-amino-acid chain: Esterase mlcF (251 aa).

Catalysis depends on charge relay system residues S126, D193, and H221.

Belongs to the LovG family.

The catalysed reaction is dihydro-ML-236C-[compactin nonaketide synthase] + H2O = holo-[compactin nonaketide synthase] + dihydro-ML-236C carboxylate + H(+). The protein operates within polyketide biosynthesis. Functionally, esterase; part of the gene cluster that mediates the biosynthesis of compactin, also known as mevastatin or ML-236B, and which acts as a potent competitive inhibitor of HMG-CoA reductase. Compactin biosynthesis is performed in two stages. The first stage is catalyzed by the nonaketide synthase mlcA, which belongs to type I polyketide synthases and catalyzes the iterative nine-step formation of the polyketide. This PKS stage is completed by the action of dehydrogenase mlcG, which catalyzes the NADPH-dependent reduction of the unsaturated tetra-, penta- and heptaketide intermediates that arise during the mlcA-mediated biosynthesis of the nonaketide chain and leads to dihydro-ML-236C carboxylate. Covalently bound dihydro-ML-236C carboxylate is released from mlcA by the mlcF esterase. Conversion of dihydro-ML-236C carboxylate into ML-236A carboxylate is subsequently performed with the participation of molecular oxygen and P450 monoogygenase mlcC. Finally, mlcH performs the conversion of ML-236A carboxylate to ML-236B/compactin carboxylate through the addition of the side-chain diketide moiety produced by the diketide synthase mlcB. In Penicillium citrinum, this protein is Esterase mlcF.